We begin with the raw amino-acid sequence, 222 residues long: Glutathione S-transferase alpha-1 (222 aa).

N-acetylmethionine is present on Met-1. The region spanning 3–83 (GKPVLHYFNA…YIATKYDLYG (81 aa)) is the GST N-terminal domain. N6-succinyllysine is present on Lys-4. Residues Tyr-9, Lys-45, 54-55 (QV), and 67-68 (QT) each bind glutathione. In terms of domain architecture, GST C-terminal spans 85–208 (DMKERALIDM…QPGSQRKLPV (124 aa)).

Belongs to the GST superfamily. Alpha family. In terms of assembly, homodimer. Homodimer or heterodimer of GSTA1 and GSTA2.

It is found in the cytoplasm. The enzyme catalyses RX + glutathione = an S-substituted glutathione + a halide anion + H(+). It carries out the reaction prostaglandin A2 + glutathione = prostaglandin A2-S-(R)-glutathione. The catalysed reaction is prostaglandin J2 + glutathione = prostaglandin J2-S-(R)-glutathione. It catalyses the reaction (13S)-hydroperoxy-(9Z,11E)-octadecadienoate + 2 glutathione = (13S)-hydroxy-(9Z,11E)-octadecadienoate + glutathione disulfide + H2O. The enzyme catalyses androst-5-ene-3,17-dione = androst-4-ene-3,17-dione. Glutathione S-transferase that catalyzes the nucleophilic attack of the sulfur atom of glutathione on the electrophilic groups of a wide range of exogenous and endogenous compounds. Involved in the formation of glutathione conjugates of both prostaglandin A2 (PGA2) and prostaglandin J2 (PGJ2). It also catalyzes the isomerization of D5-androstene-3,17-dione (AD) into D4-androstene-3,17-dione and may therefore play an important role in hormone biosynthesis. Through its glutathione-dependent peroxidase activity toward the fatty acid hydroperoxide (13S)-hydroperoxy-(9Z,11E)-octadecadienoate/13-HPODE it is also involved in the metabolism of oxidized linoleic acid. The chain is Glutathione S-transferase alpha-1 (Gsta1) from Rattus norvegicus (Rat).